The chain runs to 329 residues: Malate dehydrogenase (329 aa).

Position 12–18 (12–18 (GAAGQIG)) interacts with NAD(+). Substrate-binding residues include R93 and R99. NAD(+) is bound by residues N106, Q113, and 130 to 132 (VGN). Substrate-binding residues include N132 and R163. H188 acts as the Proton acceptor in catalysis.

Belongs to the LDH/MDH superfamily. MDH type 2 family.

The catalysed reaction is (S)-malate + NAD(+) = oxaloacetate + NADH + H(+). Its function is as follows. Catalyzes the reversible oxidation of malate to oxaloacetate. This chain is Malate dehydrogenase, found in Frankia casuarinae (strain DSM 45818 / CECT 9043 / HFP020203 / CcI3).